Consider the following 1236-residue polypeptide: DNA-directed RNA polymerase II subunit RPB2 (1236 aa).

Aspartate 846 provides a ligand contact to Mg(2+). Residues cysteine 1172, cysteine 1175, cysteine 1191, and cysteine 1194 each coordinate Zn(2+). The segment at 1172 to 1194 (CGVCGLMSVIANLKKNQFECRSC) adopts a C4-type zinc-finger fold.

Belongs to the RNA polymerase beta chain family. In terms of assembly, component of the RNA polymerase II (Pol II) complex consisting of 12 subunits.

It is found in the nucleus. It catalyses the reaction RNA(n) + a ribonucleoside 5'-triphosphate = RNA(n+1) + diphosphate. Functionally, DNA-dependent RNA polymerase catalyzes the transcription of DNA into RNA using the four ribonucleoside triphosphates as substrates. Second largest component of RNA polymerase II which synthesizes mRNA precursors and many functional non-coding RNAs. Proposed to contribute to the polymerase catalytic activity and forms the polymerase active center together with the largest subunit. Pol II is the central component of the basal RNA polymerase II transcription machinery. It is composed of mobile elements that move relative to each other. RPB2 is part of the core element with the central large cleft, the clamp element that moves to open and close the cleft and the jaws that are thought to grab the incoming DNA template. This Meyerozyma guilliermondii (strain ATCC 6260 / CBS 566 / DSM 6381 / JCM 1539 / NBRC 10279 / NRRL Y-324) (Yeast) protein is DNA-directed RNA polymerase II subunit RPB2 (RPB2).